Reading from the N-terminus, the 232-residue chain is DnaJ homolog subfamily B member 8 (232 aa).

A J domain is found at 3–69 (NYYEVLGVQA…KKRSLYDRAG (67 aa)).

Interacts with histone deacetylases HDAC4, HDAC6, and SIRT2, HDAC activity is required for antiaggregation.

Its function is as follows. Efficient suppressor of aggregation and toxicity of disease-associated polyglutamine proteins. The protein is DnaJ homolog subfamily B member 8 (DNAJB8) of Homo sapiens (Human).